Consider the following 193-residue polypeptide: dCTP deaminase (193 aa).

DCTP-binding positions include 110 to 115 (RSSLAR), Asp-128, 136 to 138 (VLE), Tyr-171, Lys-178, and Gln-182. Catalysis depends on Glu-138, which acts as the Proton donor/acceptor.

Belongs to the dCTP deaminase family. In terms of assembly, homotrimer.

It catalyses the reaction dCTP + H2O + H(+) = dUTP + NH4(+). It participates in pyrimidine metabolism; dUMP biosynthesis; dUMP from dCTP (dUTP route): step 1/2. In terms of biological role, catalyzes the deamination of dCTP to dUTP. The protein is dCTP deaminase of Buchnera aphidicola subsp. Acyrthosiphon pisum (strain APS) (Acyrthosiphon pisum symbiotic bacterium).